The primary structure comprises 630 residues: ATP-dependent RNA helicase mrh4, mitochondrial (630 aa).

Residues 1 to 46 (MNRLGGLSLPLRPVCLFCRAQTSLALSPLQGGQAVRSIATGRLRRR) constitute a mitochondrion transit peptide. A disordered region spans residues 46–108 (RARMTLSKDV…GETEEKPAMN (63 aa)). Positions 167 to 174 (DAVPTPIQ) match the Q motif motif. In terms of domain architecture, Helicase ATP-binding spans 195 to 407 (DDDEPQYEQY…RKLYPDIWRL (213 aa)). 208-215 (AETGSGKT) is an ATP binding site. The span at 235 to 255 (EMEKKEEERKVREREENKKNQ) shows a compositional bias: basic and acidic residues. The tract at residues 235–265 (EMEKKEEERKVREREENKKNQAFDLEPEIPP) is disordered. The short motif at 354 to 357 (DEAD) is the DEAD box element. The Helicase C-terminal domain maps to 452 to 630 (GSDEAGSPWS…VREVWFGLDS (179 aa)).

Belongs to the DEAD box helicase family. MRH4 subfamily.

The protein resides in the mitochondrion. The catalysed reaction is ATP + H2O = ADP + phosphate + H(+). ATP-binding RNA helicase involved in mitochondrial RNA metabolism. Required for maintenance of mitochondrial DNA. The sequence is that of ATP-dependent RNA helicase mrh4, mitochondrial (mrh4) from Emericella nidulans (strain FGSC A4 / ATCC 38163 / CBS 112.46 / NRRL 194 / M139) (Aspergillus nidulans).